Reading from the N-terminus, the 203-residue chain is Thymidylate kinase (203 aa).

Gly7–Thr14 contributes to the ATP binding site.

It belongs to the thymidylate kinase family.

The catalysed reaction is dTMP + ATP = dTDP + ADP. Functionally, phosphorylation of dTMP to form dTDP in both de novo and salvage pathways of dTTP synthesis. This chain is Thymidylate kinase (tmk), found in Chlamydia trachomatis serovar D (strain ATCC VR-885 / DSM 19411 / UW-3/Cx).